Here is a 413-residue protein sequence, read N- to C-terminus: Probable aminotransferase sirI (413 aa).

Residue lysine 255 is modified to N6-(pyridoxal phosphate)lysine.

It belongs to the class-I pyridoxal-phosphate-dependent aminotransferase family. It depends on pyridoxal 5'-phosphate as a cofactor.

The protein operates within mycotoxin biosynthesis. Its function is as follows. Probable aminotransferase; part of the gene cluster that mediates the biosynthesis of sirodesmin PL, an epipolythiodioxopiperazine (ETP) characterized by a disulfide bridged cyclic dipeptide and that acts as a phytotoxin which is involved in the blackleg didease of canola. SirD catalyzes the O-prenylation of L-tyrosine (L-Tyr) in the presence of dimethylallyl diphosphate (DMAPP) to yield 4-O-dimethylallyl-L-Tyr, and therefore represents probably the first pathway-specific enzyme in the biosynthesis of sirodesmin PL. 4-O-dimethylallyl-L-Tyr, then undergoes condensation with L-Ser in a reaction catalyzed by the non-ribosomal peptide synthase sirP to form the diketopiperazine (DKP) backbone. Further bishydroxylation of the DKP performed by the cytochrome P450 monooxygenase sirC leads to the production of the intermediate phomamide. This step is essential to form the reactive thiol group required for toxicity of sirodesmin PL. The next steps of sirodesmin biosynthesis are not well understood yet, but some predictions could be made from intermediate compounds identification. Phomamide is converted into phomalizarine via oxidation, probably by sirT. Further oxidation, methylation (by sirM or sirN) and reduction steps convert phomalizarine to deacetyl sirodesmin. Finally, acetyltransferase sirH probably acetylates deacetyl sirodesmin to produce sirodesmin PL. The chain is Probable aminotransferase sirI from Leptosphaeria maculans (Blackleg fungus).